We begin with the raw amino-acid sequence, 98 residues long: NADH-ubiquinone oxidoreductase chain 4L (98 aa).

3 helical membrane-spanning segments follow: residues 1-21 (MLSI…GVLI), 29-49 (TLLC…LLIT), and 59-79 (TPLI…ALLV).

Belongs to the complex I subunit 4L family. As to quaternary structure, core subunit of respiratory chain NADH dehydrogenase (Complex I) which is composed of 45 different subunits.

The protein resides in the mitochondrion inner membrane. The catalysed reaction is a ubiquinone + NADH + 5 H(+)(in) = a ubiquinol + NAD(+) + 4 H(+)(out). Core subunit of the mitochondrial membrane respiratory chain NADH dehydrogenase (Complex I) which catalyzes electron transfer from NADH through the respiratory chain, using ubiquinone as an electron acceptor. Part of the enzyme membrane arm which is embedded in the lipid bilayer and involved in proton translocation. This chain is NADH-ubiquinone oxidoreductase chain 4L (MT-ND4L), found in Sminthopsis crassicaudata (Fat-tailed dunnart).